Reading from the N-terminus, the 446-residue chain is Phosphoglucosamine mutase (446 aa).

The active-site Phosphoserine intermediate is the serine 99. The Mg(2+) site is built by serine 99, aspartate 242, aspartate 244, and aspartate 246. Phosphoserine is present on serine 99.

The protein belongs to the phosphohexose mutase family. Mg(2+) serves as cofactor. In terms of processing, activated by phosphorylation.

The catalysed reaction is alpha-D-glucosamine 1-phosphate = D-glucosamine 6-phosphate. Catalyzes the conversion of glucosamine-6-phosphate to glucosamine-1-phosphate. This is Phosphoglucosamine mutase from Campylobacter curvus (strain 525.92).